A 209-amino-acid chain; its full sequence is Large ribosomal subunit protein uL3 (209 aa).

Residues 132-153 form a disordered region; that stretch reads ATHGNSLSHRVPGSIGQNQTPG. Q150 bears the N5-methylglutamine mark.

The protein belongs to the universal ribosomal protein uL3 family. In terms of assembly, part of the 50S ribosomal subunit. Forms a cluster with proteins L14 and L19. In terms of processing, methylated by PrmB.

In terms of biological role, one of the primary rRNA binding proteins, it binds directly near the 3'-end of the 23S rRNA, where it nucleates assembly of the 50S subunit. This chain is Large ribosomal subunit protein uL3, found in Erwinia tasmaniensis (strain DSM 17950 / CFBP 7177 / CIP 109463 / NCPPB 4357 / Et1/99).